The following is a 299-amino-acid chain: Recombination-associated protein RdgC (299 aa).

It belongs to the RdgC family.

The protein resides in the cytoplasm. It localises to the nucleoid. Its function is as follows. May be involved in recombination. The protein is Recombination-associated protein RdgC of Neisseria meningitidis serogroup A / serotype 4A (strain DSM 15465 / Z2491).